We begin with the raw amino-acid sequence, 207 residues long: Macrophage immunometabolism regulator (207 aa).

Met1 is subject to N-acetylmethionine. Residues 1–41 form a disordered region; sequence MEVDVNGESRSALTTLPLPVAEASSPGKAEAEKPRCSSTPC. Ser25, Ser140, and Ser167 each carry phosphoserine.

Belongs to the UNC119-binding protein family. As to quaternary structure, interacts with UNC119 and UNC119B; interaction preferentially takes place when UNC119 and UNC119B are unliganded with myristoylated proteins.

Its subcellular location is the cytoplasm. It localises to the cell projection. The protein localises to the cilium. In terms of biological role, regulates the macrophage function, by enhancing the resolution of inflammation and wound repair functions mediated by M2 macrophages. The regulation of macrophage function is, due at least in part, to its ability to inhibit glycolysis. May play also a role in trafficking of proteins via its interaction with UNC119 and UNC119B cargo adapters: may help the release of UNC119 and UNC119B cargo or the recycling of UNC119 and UNC119B. May play a role in ciliary membrane localization via its interaction with UNC119B and protein transport into photoreceptor cells. This is Macrophage immunometabolism regulator (MACIR) from Bos taurus (Bovine).